We begin with the raw amino-acid sequence, 604 residues long: Phosphomethylpyrimidine synthase (604 aa).

Residues Asn-218, Met-247, Tyr-276, His-312, 332–334 (SRG), 373–376 (DGLR), and Glu-412 each bind substrate. Zn(2+) is bound at residue His-416. Tyr-439 provides a ligand contact to substrate. His-480 contacts Zn(2+). The [4Fe-4S] cluster site is built by Cys-560, Cys-563, and Cys-568.

It belongs to the ThiC family. As to quaternary structure, homodimer. It depends on [4Fe-4S] cluster as a cofactor.

The enzyme catalyses 5-amino-1-(5-phospho-beta-D-ribosyl)imidazole + S-adenosyl-L-methionine = 4-amino-2-methyl-5-(phosphooxymethyl)pyrimidine + CO + 5'-deoxyadenosine + formate + L-methionine + 3 H(+). Its pathway is cofactor biosynthesis; thiamine diphosphate biosynthesis. Catalyzes the synthesis of the hydroxymethylpyrimidine phosphate (HMP-P) moiety of thiamine from aminoimidazole ribotide (AIR) in a radical S-adenosyl-L-methionine (SAM)-dependent reaction. In Zymomonas mobilis subsp. mobilis (strain ATCC 31821 / ZM4 / CP4), this protein is Phosphomethylpyrimidine synthase.